Consider the following 138-residue polypeptide: Phospholipase A2 homolog 1 (138 aa).

The signal sequence occupies residues 1-16; that stretch reads MRTLWIMAVLLVGVEG. Intrachain disulfides connect cysteine 42-cysteine 132, cysteine 44-cysteine 60, cysteine 59-cysteine 111, cysteine 65-cysteine 138, cysteine 66-cysteine 104, cysteine 73-cysteine 97, and cysteine 91-cysteine 102. The tract at residues 121–134 is important for membrane-damaging activities in eukaryotes and bacteria; heparin-binding; sequence KKYKNNYLKPFCKK.

Belongs to the phospholipase A2 family. Group II subfamily. K49 sub-subfamily. As to quaternary structure, homodimer; non-covalently linked (probable alternative/compact dimer conformation in solution). Expressed by the venom gland.

The protein localises to the secreted. Snake venom phospholipase A2 homolog that lacks enzymatic and anticoagulant activities. In mice, it induces conspicuous local myonecrosis, edema, and a systemic interleukin-6 response. In vitro, it is cytolytic upon myoblasts, and weakly bactericidal. A model of myotoxic mechanism has been proposed: an apo Lys49-PLA2 is activated by the entrance of a hydrophobic molecule (e.g. fatty acid) at the hydrophobic channel of the protein leading to a reorientation of a monomer. This reorientation causes a transition between 'inactive' to 'active' states, causing alignment of C-terminal and membrane-docking sites (MDoS) side-by-side and putting the membrane-disruption sites (MDiS) in the same plane, exposed to solvent and in a symmetric position for both monomers. The MDoS region stabilizes the toxin on membrane by the interaction of charged residues with phospholipid head groups. Subsequently, the MDiS region destabilizes the membrane with penetration of hydrophobic residues. This insertion causes a disorganization of the membrane, allowing an uncontrolled influx of ions (i.e. calcium and sodium), and eventually triggering irreversible intracellular alterations and cell death. The protein is Phospholipase A2 homolog 1 of Bothrops atrox (Barba amarilla).